The chain runs to 292 residues: Cyclin-dependent kinase 5 (292 aa).

The 283-residue stretch at Tyr-4–Phe-286 folds into the Protein kinase domain. ATP is bound by residues Ile-10–Val-18 and Lys-33. At Tyr-15 the chain carries Phosphotyrosine; by ABL1, EPHA4 and FYN. Thr-17 carries the phosphothreonine modification. N6-acetyllysine is present on Lys-56. At Ser-72 the chain carries Phosphoserine. The active-site Proton acceptor is Asp-126. Ser-159 is modified (phosphoserine).

Belongs to the protein kinase superfamily. CMGC Ser/Thr protein kinase family. CDC2/CDKX subfamily. Heterodimer composed of a catalytic subunit CDK5 and a regulatory subunit CDK5R1 (p25) and macromolecular complex composed of at least CDK5, CDK5R1 (p35) and CDK5RAP1 or CDK5RAP2 or CDK5RAP3. Only the heterodimer shows kinase activity. Under neurotoxic stress and neuronal injury conditions, p35 is cleaved by calpain to generate p25 that hyperactivates CDK5, that becomes functionally disabled and often toxic. Found in a trimolecular complex with CABLES1 and ABL1. Interacts with CABLES1 and CABLES2. Interacts with AATK and GSTP1. Binds to HDAC1 when in complex with p25. Interaction with myristoylation p35 promotes CDK5 association with membranes. Both isoforms 1 and 2 interacts with beta-catenin/CTNNB1. Interacts with delta-catenin/CTNND2 and APEX1. Interacts with P53/TP53 in neurons. Interacts with PTK2/FAK1. Interacts with EPHA4; may mediate the activation of NGEF by EPHA4. The complex p35/CDK5 interacts with CLOCK. Interacts with HTR6. Post-translationally, phosphorylation on Tyr-15 by ABL1 and FYN, and on Ser-159 by casein kinase 1 promotes kinase activity. By contrast, phosphorylation at Thr-14 inhibits activity. In terms of processing, phosphorylation at Ser-159 is essential for maximal catalytic activity. Expressed in hippocampal neuronal synaptic termini (at protein level). Expressed predominantly in post-mitotic neurons of the central and peripheral nervous system.

Its subcellular location is the cytoplasm. It is found in the nucleus. The protein resides in the cell membrane. It localises to the perikaryon. The protein localises to the cell projection. Its subcellular location is the lamellipodium. It is found in the growth cone. The protein resides in the postsynaptic density. It localises to the synapse. It carries out the reaction L-seryl-[protein] + ATP = O-phospho-L-seryl-[protein] + ADP + H(+). It catalyses the reaction L-threonyl-[protein] + ATP = O-phospho-L-threonyl-[protein] + ADP + H(+). Inhibited by 2-(1-ethyl-2-hydroxyethylamino)-6-benzylamino-9-isopropylpurine (roscovitine), 1-isopropyl-4-aminobenzyl-6-ether-linked benzimidazoles, resveratrol, AT-7519 and olomoucine. Activated by CDK5R1 (p35) and CDK5R2 (p39) during the development of the nervous system; degradation of CDK5R1 (p35) and CDK5R2 (p39) by proteasome result in down regulation of kinase activity, during this process, CDK5 phosphorylates p35 and induces its ubiquitination and subsequent degradation. Kinase activity is mainly determined by the amount of p35 available and subcellular location; reversible association to plasma membrane inhibits activity. Long-term inactivation as well as CDK5R1 (p25)-mediated hyperactivation of CDK5 triggers cell death. The pro-death activity of hyperactivated CDK5 is suppressed by membrane association of CDK5, via myristoylation of p35. Brain-derived neurotrophic factor, glial-derived neurotrophic factor, nerve growth factor (NGF), retinoic acid, laminin and neuregulin promote activity. Neurotoxicity enhances nuclear activity, thus leading to MEF2 phosphorylation and inhibition prior to apoptosis of cortical neurons. Repression by GSTP1 via p25/p35 translocation prevents neurodegeneration. Functionally, proline-directed serine/threonine-protein kinase essential for neuronal cell cycle arrest and differentiation and may be involved in apoptotic cell death in neuronal diseases by triggering abortive cell cycle re-entry. Interacts with D1 and D3-type G1 cyclins. Phosphorylates SRC, NOS3, VIM/vimentin, p35/CDK5R1, MEF2A, SIPA1L1, SH3GLB1, PXN, PAK1, MCAM/MUC18, SEPT5, SYN1, DNM1, AMPH, SYNJ1, CDK16, RAC1, RHOA, CDC42, TONEBP/NFAT5, MAPT/TAU, MAP1B, histone H1, p53/TP53, HDAC1, APEX1, PTK2/FAK1, huntingtin/HTT, ATM, MAP2, NEFH and NEFM. Regulates several neuronal development and physiological processes including neuronal survival, migration and differentiation, axonal and neurite growth, synaptogenesis, oligodendrocyte differentiation, synaptic plasticity and neurotransmission, by phosphorylating key proteins. Negatively regulates the CACNA1B/CAV2.2 -mediated Ca(2+) release probability at hippocampal neuronal soma and synaptic terminals. Activated by interaction with CDK5R1 (p35) and CDK5R2 (p39), especially in postmitotic neurons, and promotes CDK5R1 (p35) expression in an autostimulation loop. Phosphorylates many downstream substrates such as Rho and Ras family small GTPases (e.g. PAK1, RAC1, RHOA, CDC42) or microtubule-binding proteins (e.g. MAPT/TAU, MAP2, MAP1B), and modulates actin dynamics to regulate neurite growth and/or spine morphogenesis. Also phosphorylates exocytosis associated proteins such as MCAM/MUC18, SEPT5, SYN1, and CDK16/PCTAIRE1 as well as endocytosis associated proteins such as DNM1, AMPH and SYNJ1 at synaptic terminals. In the mature central nervous system (CNS), regulates neurotransmitter movements by phosphorylating substrates associated with neurotransmitter release and synapse plasticity; synaptic vesicle exocytosis, vesicles fusion with the presynaptic membrane, and endocytosis. Promotes cell survival by activating anti-apoptotic proteins BCL2 and STAT3, and negatively regulating of JNK3/MAPK10 activity. Phosphorylation of p53/TP53 in response to genotoxic and oxidative stresses enhances its stabilization by preventing ubiquitin ligase-mediated proteasomal degradation, and induces transactivation of p53/TP53 target genes, thus regulating apoptosis. Phosphorylation of p35/CDK5R1 enhances its stabilization by preventing calpain-mediated proteolysis producing p25/CDK5R1 and avoiding ubiquitin ligase-mediated proteasomal degradation. During aberrant cell-cycle activity and DNA damage, p25/CDK5 activity elicits cell-cycle activity and double-strand DNA breaks that precedes neuronal death by deregulating HDAC1. DNA damage triggered phosphorylation of huntingtin/HTT in nuclei of neurons protects neurons against polyglutamine expansion as well as DNA damage mediated toxicity. Phosphorylation of PXN reduces its interaction with PTK2/FAK1 in matrix-cell focal adhesions (MCFA) during oligodendrocytes (OLs) differentiation. Negative regulator of Wnt/beta-catenin signaling pathway. Activator of the GAIT (IFN-gamma-activated inhibitor of translation) pathway, which suppresses expression of a post-transcriptional regulon of proinflammatory genes in myeloid cells; phosphorylates the linker domain of glutamyl-prolyl tRNA synthetase (EPRS) in a IFN-gamma-dependent manner, the initial event in assembly of the GAIT complex. Phosphorylation of SH3GLB1 is required for autophagy induction in starved neurons. Phosphorylation of TONEBP/NFAT5 in response to osmotic stress mediates its rapid nuclear localization. MEF2 is inactivated by phosphorylation in nucleus in response to neurotoxin, thus leading to neuronal apoptosis. APEX1 AP-endodeoxyribonuclease is repressed by phosphorylation, resulting in accumulation of DNA damage and contributing to neuronal death. NOS3 phosphorylation down regulates NOS3-derived nitrite (NO) levels. SRC phosphorylation mediates its ubiquitin-dependent degradation and thus leads to cytoskeletal reorganization. May regulate endothelial cell migration and angiogenesis via the modulation of lamellipodia formation. Involved in dendritic spine morphogenesis by mediating the EFNA1-EPHA4 signaling. The complex p35/CDK5 participates in the regulation of the circadian clock by modulating the function of CLOCK protein: phosphorylates CLOCK at 'Thr-451' and 'Thr-461' and regulates the transcriptional activity of the CLOCK-BMAL1 heterodimer in association with altered stability and subcellular distribution. The polypeptide is Cyclin-dependent kinase 5 (Rattus norvegicus (Rat)).